Reading from the N-terminus, the 313-residue chain is Proline iminopeptidase (313 aa).

An AB hydrolase-1 domain is found at 35-298; sequence KPVVMLHGGP…SPASGHSAFE (264 aa). Residue S110 is the Nucleophile of the active site. D266 is an active-site residue. Residue H294 is the Proton donor of the active site.

This sequence belongs to the peptidase S33 family. Homooligomer.

The protein resides in the cytoplasm. The catalysed reaction is Release of N-terminal proline from a peptide.. Functionally, may be involved in proline metabolism and sensitivity to ascamycin. Has ascamycin dealanylating activity. The protein is Proline iminopeptidase (pip) of Xanthomonas citri (Xanthomonas campestris pv. citri).